Consider the following 137-residue polypeptide: Large ribosomal subunit protein uL16 (137 aa).

The span at 1 to 13 (MLQPKRRKYRKEQ) shows a compositional bias: basic residues. Residues 1–22 (MLQPKRRKYRKEQKGRNTGVAT) form a disordered region.

It belongs to the universal ribosomal protein uL16 family. In terms of assembly, part of the 50S ribosomal subunit.

In terms of biological role, binds 23S rRNA and is also seen to make contacts with the A and possibly P site tRNAs. This chain is Large ribosomal subunit protein uL16, found in Polynucleobacter asymbioticus (strain DSM 18221 / CIP 109841 / QLW-P1DMWA-1) (Polynucleobacter necessarius subsp. asymbioticus).